A 286-amino-acid polypeptide reads, in one-letter code: MDLWFSEVHTPDVKLSLRTAKQLYAGKSEWQDIEVLDTPAFGKILILNGHVLFSDADDFVYNEMTVHVPMAVHPNPKKVLVIGGGDGGVAQVLTLYPELEQIDIVEPDEMLVEVCREYFPDFAAGLDDPRVTIYYQNGLRFLRNCEDDYDIIINDATDPFGHTEGLFTKEFYGNSYRALKEDGIMIYQHGSPFFDEDESACRSMHRKVNQAFPISRVYQAHIPTSPAGYWLFGFASKKYHPVKDFDKEGWKKRQLFTEYYTANLHVGAFMLPKYVEDILEEEEGKK.

Residues 2-237 form the PABS domain; it reads DLWFSEVHTP…GYWLFGFASK (236 aa). Residue Gln31 coordinates S-methyl-5'-thioadenosine. Residue Asp86 coordinates spermidine. S-methyl-5'-thioadenosine-binding positions include Glu106 and 137–138; that span reads NG. The Proton acceptor role is filled by Asp155.

This sequence belongs to the spermidine/spermine synthase family. As to quaternary structure, homodimer or homotetramer.

Its subcellular location is the cytoplasm. It catalyses the reaction S-adenosyl 3-(methylsulfanyl)propylamine + putrescine = S-methyl-5'-thioadenosine + spermidine + H(+). It participates in amine and polyamine biosynthesis; spermidine biosynthesis; spermidine from putrescine: step 1/1. Its function is as follows. Catalyzes the irreversible transfer of a propylamine group from the amino donor S-adenosylmethioninamine (decarboxy-AdoMet) to putrescine (1,4-diaminobutane) to yield spermidine. In Streptococcus pneumoniae serotype 4 (strain ATCC BAA-334 / TIGR4), this protein is Polyamine aminopropyltransferase.